Consider the following 499-residue polypeptide: Protein SENSITIVE TO PROTON RHIZOTOXICITY 1 (499 aa).

The interval 1–31 (METEDDLCNTNWGSSSSKSREPGSSDCGNST) is disordered. The C2H2-type 1 zinc finger occupies 244–266 (HFCTICGKGFKRDANLRMHMRGH). Residues 354 to 385 (KHCGKNKWLCSCGTTFSRKDKLFGHIALFQGH) form a C2H2-type 2; atypical zinc finger. Residues 390–436 (PLEETKPSASTSTQRGSSEGGNNNQGMVGFNLGSASNANQETTQPGM) form a disordered region. Composition is skewed to polar residues over residues 396-415 (PSASTSTQRGSSEGGNNNQG) and 422-435 (GSASNANQETTQPG).

Expressed in roots (e.g. root tips and lateral roots), leaves, flowers (e.g. stigma, sepal, anther, and filament), stems, siliques and cotyledons.

Its subcellular location is the nucleus. In terms of biological role, probable transcription factor. Together with STOP2, plays a critical role in tolerance to major stress factors in acid soils such as proton H(+) and aluminum ion Al(3+). Required for the expression of genes in response to acidic stress (e.g. ALMT1 and MATE), and Al-activated citrate exudation. In Arabidopsis thaliana (Mouse-ear cress), this protein is Protein SENSITIVE TO PROTON RHIZOTOXICITY 1.